A 347-amino-acid chain; its full sequence is Leukocyte cell-derived chemotaxin 1 (347 aa).

Positions 1–29 (MAEGSEKVPIARAGPEDVEQGLPPAYTAA) are disordered. A helical transmembrane segment spans residues 45 to 65 (VLIAGALLLLAGAIGAFYFWK). The 98-residue stretch at 103–200 (GSGSEEAVEV…LCGDLPIFWL (98 aa)) folds into the BRICHOS domain. The cysteines at positions 130 and 192 are disulfide-linked. The segment at 208 to 281 (KQRERREMKR…DNPYNQLEGE (74 aa)) is disordered. A propeptide spanning residues 210 to 213 (RERR) is cleaved from the precursor. Polar residues predominate over residues 240-276 (TRSTPTQLTQDLGPQSNETRPMQQESDQTLNPDNPYN). A glycan (N-linked (GlcNAc...) asparagine) is linked at asparagine 256. Cystine bridges form between cysteine 295–cysteine 299, cysteine 296–cysteine 336, cysteine 306–cysteine 330, and cysteine 310–cysteine 326.

Belongs to the chondromodulin-1 family. Post-translationally, after cleavage, the post-translationally modified ChM-I is secreted as a glycoprotein. As to expression, expressed in the cartilage and in fetal precartilaginous tissues as well as in heart and eye.

Its subcellular location is the secreted. It is found in the extracellular space. The protein resides in the extracellular matrix. It localises to the endomembrane system. In terms of biological role, bifunctional growth regulator. May contribute to the rapid growth of cartilage and vascular invasion prior to the replacement of cartilage by bone during endochondral bone development. Plays a role as antiangiogenic factor in cardiac valves to suppress neovascularization. The protein is Leukocyte cell-derived chemotaxin 1 of Gallus gallus (Chicken).